Consider the following 830-residue polypeptide: Protein PAM1 (830 aa).

A coiled-coil region spans residues 379–400; it reads LQNSESTLKNEIKELQSQVLSL. 4 disordered regions span residues 426-488, 513-558, 648-699, and 727-757; these read DNSL…ETSL, ALQQ…SQPQ, NGMN…NYNI, and SRNADSAPCVNQLNSDSPPQLQSLSQNGTSK. Positions 433–444 are enriched in polar residues; the sequence is PNSNTNGISPSD. The stretch at 481–514 forms a coiled coil; the sequence is LSRDETSLKERELEVRMKELELQERELELQRKAL. Low complexity-rich tracts occupy residues 513-527 and 538-555; these read ALQQQQQYQQRPPKQ and SGNNNNKSYNPNRKSSYS. Over residues 651 to 699 the composition is skewed to polar residues; that stretch reads NGTQSRLNSLSNQSTFRSQQGPPITQQKSFQNNGGSMRTNRIPSANYNI. A phosphoserine mark is found at Ser-659 and Ser-732. Residues 738–753 are compositionally biased toward low complexity; sequence QLNSDSPPQLQSLSQN. The residue at position 767 (Ser-767) is a Phosphoserine. Residues 796–806 are compositionally biased toward polar residues; it reads AATANNISTMG. The segment at 796 to 830 is disordered; that stretch reads AATANNISTMGDESRKEDVKEKKKKKFSFFGKRKK. The span at 807–816 shows a compositional bias: basic and acidic residues; it reads DESRKEDVKE. Over residues 817 to 830 the composition is skewed to basic residues; the sequence is KKKKKFSFFGKRKK.

This sequence belongs to the PAM1/SVL3 family.

Functionally, not known. It is a suppressor of protein phosphatase 2A depletion. The polypeptide is Protein PAM1 (PAM1) (Saccharomyces cerevisiae (strain ATCC 204508 / S288c) (Baker's yeast)).